Here is a 316-residue protein sequence, read N- to C-terminus: Taste receptor type 2 member 3 (316 aa).

The Extracellular portion of the chain corresponds to 1–6 (MMGLTE). Residues 7–27 (GVFLILSGTQFTLGILVNCFI) traverse the membrane as a helical segment. Residues 28–42 (ELVNGSSWFKTKRMS) are Cytoplasmic-facing. The chain crosses the membrane as a helical span at residues 43-63 (LSDFIITTLALLRIILLCIIL). At 64 to 94 (TDSFLIEFSPNTHDSGIIMQIIDVSWTFTNH) the chain is on the extracellular side. A helical transmembrane segment spans residues 95–115 (LSIWLATCLGVLYCLKIASFS). At 116–128 (HPTFLWLKWRVSR) the chain is on the cytoplasmic side. The helical transmembrane segment at 129-149 (VMVWMLLGALLLSCGSTASLI) threads the bilayer. Residues 150-186 (NEFKLYSVFRGIEATRNVTEHFRKKRSEYYLIHVLGT) are Extracellular-facing. A glycan (N-linked (GlcNAc...) asparagine) is linked at N166. The chain crosses the membrane as a helical span at residues 187-207 (LWYLPPLIVSLASYSLLIFSL). Topologically, residues 208–234 (GRHTRQMLQNGTSSRDPTTEAHKRAIR) are cytoplasmic. The helical transmembrane segment at 235–255 (IILSFFFLFLLYFLAFLIASF) threads the bilayer. Residues 256-266 (GNFLPKTKMAK) are Extracellular-facing. A helical transmembrane segment spans residues 267 to 287 (MIGEVMTMFYPAGHSFILILG). Residues 288 to 316 (NSKLKQTFVVMLRCESGHLKPGSKGPIFS) are Cytoplasmic-facing.

Belongs to the G-protein coupled receptor T2R family. Expressed in subsets of taste receptor cells of the tongue and palate epithelium and exclusively in gustducin-positive cells. Expressed in the antrum and fundus (part of the stomach), duodenum and in gastric endocrine cells.

Its subcellular location is the membrane. In terms of biological role, gustducin-coupled receptor implicated in the perception of bitter compounds in the oral cavity and the gastrointestinal tract. Signals through PLCB2 and the calcium-regulated cation channel TRPM5. This chain is Taste receptor type 2 member 3 (TAS2R3), found in Homo sapiens (Human).